The primary structure comprises 123 residues: Protein Wnt-3b (123 aa).

Residue Ser1 is the site of O-palmitoleoyl serine; by PORCN attachment. A disulfide bond links Cys89 and Cys104. N-linked (GlcNAc...) asparagine glycosylation is present at Asn90.

Belongs to the Wnt family. Palmitoleoylation is required for efficient binding to frizzled receptors. Depalmitoleoylation leads to Wnt signaling pathway inhibition.

Its subcellular location is the secreted. The protein localises to the extracellular space. It is found in the extracellular matrix. Its function is as follows. Ligand for members of the frizzled family of seven transmembrane receptors. Probable developmental protein. May be a signaling molecule which affects the development of discrete regions of tissues. Is likely to signal over only few cell diameters. This Meleagris gallopavo (Wild turkey) protein is Protein Wnt-3b (WNT3B).